The primary structure comprises 190 residues: GTP cyclohydrolase 1 (190 aa).

Zn(2+) is bound by residues Cys75, His78, and Cys146.

Belongs to the GTP cyclohydrolase I family. Toroid-shaped homodecamer, composed of two pentamers of five dimers.

The catalysed reaction is GTP + H2O = 7,8-dihydroneopterin 3'-triphosphate + formate + H(+). The protein operates within cofactor biosynthesis; 7,8-dihydroneopterin triphosphate biosynthesis; 7,8-dihydroneopterin triphosphate from GTP: step 1/1. The protein is GTP cyclohydrolase 1 of Campylobacter curvus (strain 525.92).